The sequence spans 174 residues: Transcription factor bHLH36 (174 aa).

Positions 1–53 (MEKMMHRETERQRRQEMASLYASLRSLLPLHFIKGKRSTSDQVNEAVNYIKYL) constitute a bHLH domain.

In terms of assembly, homodimer. In terms of tissue distribution, expressed constitutively in roots, leaves, stems, and flowers.

Its subcellular location is the nucleus. The sequence is that of Transcription factor bHLH36 (BHLH36) from Arabidopsis thaliana (Mouse-ear cress).